Here is a 616-residue protein sequence, read N- to C-terminus: MRNLFKTATIYILIALVILLLVDIFSGGLSYNQFFSNLSERREVIYSELINDINDGKVTRIVLSYNNVSGQYADGTKFDNVFVPSPDKFLDQIQPAIQAKKIQIVTKEPPQVPWWLSTFLPMLIFAGLMIFVWIFMLQQTQGGGSKIMSFTKSRAKTIQDLKKKVTFADVAGADEEKEELKEVIDFLKNPRKYIELGARIPKGILLVGPPGTGKTLLAKAVAGEAGVPFFSISGSDFVEMFVGVGAARVRDLFDQAKRNAPCVVFIDEIDAVGRHRGAGLGGGHDEREQTLNQLLVEMDGFGTNEGIIVMAATNRPDILDPALLRPGRFDRQIVVNVPDAKAREEILKVHARNKPLGEDVDLSQIAKITAGFTGADLENLLNEAALLAARKGKRQINMEEVQEAVAKVLMGPEKRSRVYTEKEKKLTAYHEAGHAIVRTMIPDSEPVHEVSIIPRGYAGGYTMYLPKEDKFYASKSDMMREIVTLLGGRVAEKLVLEDVSTGAASDIKRATKIARDMVTKYGMSDKLGPMTFGTEQEEVFLGRDLALARNYSEEVAAEIDREIKSIIEEAYKKAEEILKQNIDKLHKVANALLEKEKLTGEEFRKLVFEDAQPQLV.

The Cytoplasmic portion of the chain corresponds to 1 to 8; sequence MRNLFKTA. Residues 9–29 traverse the membrane as a helical segment; it reads TIYILIALVILLLVDIFSGGL. The Extracellular segment spans residues 30-114; sequence SYNQFFSNLS…VTKEPPQVPW (85 aa). The helical transmembrane segment at 115–135 threads the bilayer; it reads WLSTFLPMLIFAGLMIFVWIF. Over 136–616 the chain is Cytoplasmic; that stretch reads MLQQTQGGGS…VFEDAQPQLV (481 aa). ATP is bound at residue 208-215; the sequence is GPPGTGKT. Residue H430 participates in Zn(2+) binding. Residue E431 is part of the active site. Residues H434 and D506 each coordinate Zn(2+).

This sequence in the central section; belongs to the AAA ATPase family. It in the C-terminal section; belongs to the peptidase M41 family. In terms of assembly, homohexamer. Zn(2+) is required as a cofactor.

The protein resides in the cell membrane. Acts as a processive, ATP-dependent zinc metallopeptidase for both cytoplasmic and membrane proteins. Plays a role in the quality control of integral membrane proteins. In Caldicellulosiruptor bescii (strain ATCC BAA-1888 / DSM 6725 / KCTC 15123 / Z-1320) (Anaerocellum thermophilum), this protein is ATP-dependent zinc metalloprotease FtsH.